The primary structure comprises 485 residues: Adenylate kinase 8 (485 aa).

Adenylate kinase regions lie at residues 58 to 258 (PRVF…TFVL) and 269 to 471 (PRIL…SYIV). 67–72 (ASGKHT) provides a ligand contact to ATP. Residues 87 to 113 (TPENVLSSDVSLLVKEAQSYRDKGQEV) are NMP 1. AMP is bound by residues 140–143 (GFPK) and glutamine 147. Residues 177 to 206 (GKRIDITDGEVYHTTFDWPSDPAVQRNLVE) form an LID 1 region. Arginine 218 lines the AMP pocket. 278 to 283 (GSGRSL) is a binding site for ATP. The interval 298–327 (CCGQVLKEAVADQTKLGELIQPYIENDQQV) is NMP 2. AMP-binding positions include 325 to 327 (QQV), 354 to 357 (GFPQ), and glutamine 361. Positions 391–424 (LCMTDPVSGERYHSIYKPAPRSEVQERLQQNPKY) are LID 2. Arginine 432 serves as a coordination point for AMP.

The protein belongs to the adenylate kinase family.

It is found in the cytoplasm. The protein localises to the cytosol. The enzyme catalyses AMP + ATP = 2 ADP. It carries out the reaction a 2'-deoxyribonucleoside 5'-diphosphate + ATP = a 2'-deoxyribonucleoside 5'-triphosphate + ADP. The catalysed reaction is a ribonucleoside 5'-diphosphate + ATP = a ribonucleoside 5'-triphosphate + ADP. Nucleoside monophosphate (NMP) kinase that catalyzes the reversible transfer of the terminal phosphate group between nucleoside triphosphates and monophosphates. Has highest activity toward AMP, and weaker activity toward dAMP, CMP and dCMP. Also displays broad nucleoside diphosphate kinase activity. This Xenopus laevis (African clawed frog) protein is Adenylate kinase 8 (ak8).